The primary structure comprises 88 residues: Small ribosomal subunit protein uS17 (88 aa).

It belongs to the universal ribosomal protein uS17 family. In terms of assembly, part of the 30S ribosomal subunit.

One of the primary rRNA binding proteins, it binds specifically to the 5'-end of 16S ribosomal RNA. The sequence is that of Small ribosomal subunit protein uS17 from Ligilactobacillus salivarius (strain UCC118) (Lactobacillus salivarius).